A 69-amino-acid chain; its full sequence is FMRFamide-like neuropeptides 24 (69 aa).

The signal sequence occupies residues 1–25; the sequence is MLSSRTSSIILILAILVAIMAVAQC. The propeptide occupies 26 to 51; it reads RNIQYDVEEMTPEAAFRYAQWGEIPH. A Phenylalanine amide modification is found at phenylalanine 64. A propeptide spanning residues 68–69 is cleaved from the precursor; it reads SI.

It belongs to the FARP (FMRFamide related peptide) family.

Its subcellular location is the secreted. Functionally, probable FMRFamide-like neuropeptides. Plays a role in behaviors associated with a sleep-like state induced by stress (SIS), acting in concert with the FMRFamide related peptide flp-13 and neuropeptide-like protein nlp-8. The protein is FMRFamide-like neuropeptides 24 of Caenorhabditis elegans.